Reading from the N-terminus, the 190-residue chain is Large ribosomal subunit protein bL9 (190 aa).

This sequence belongs to the bacterial ribosomal protein bL9 family.

Functionally, binds to the 23S rRNA. The polypeptide is Large ribosomal subunit protein bL9 (Methylorubrum extorquens (strain CM4 / NCIMB 13688) (Methylobacterium extorquens)).